The primary structure comprises 606 residues: DNA mismatch repair protein MutL (606 aa).

The tract at residues 377 to 401 is disordered; the sequence is HRPLFAPQPAPQPDREPPLPDSGSR.

It belongs to the DNA mismatch repair MutL/HexB family.

Functionally, this protein is involved in the repair of mismatches in DNA. It is required for dam-dependent methyl-directed DNA mismatch repair. May act as a 'molecular matchmaker', a protein that promotes the formation of a stable complex between two or more DNA-binding proteins in an ATP-dependent manner without itself being part of a final effector complex. This Geobacter sulfurreducens (strain ATCC 51573 / DSM 12127 / PCA) protein is DNA mismatch repair protein MutL.